Reading from the N-terminus, the 447-residue chain is MPSQRSSLMQPIPEETRKTPSAAAEDKRWSRPECQLWTGMLLLGTCLLYCTRVTMPVCTVAMSQDFGWNKKEAGIVLSSFFWGYCLTQVVGGHLGDRIGGEKVILLSASAWGFITVTTPLLAHLGSGHLAFVTFSRILTGLLQGVYFPALTSLLSQRVQESERSFTYSTVGAGSQVGTLVTGGIGSVLLDRCGWQSVFYFSGGLTLLWVYYVYKYLLDEKDLVLALGVLAQGLPVTRPSKVPWRQLFRKASVWAVICSQLSSACSFFILLSWLPTFFKETFPHSKGWVFNVVPWLLAIPASLFSGFISDRLISQGYRVITVRKFMQVMGLGLSSIFALCLGHTTSFLKSMIFASASIGFQTFNHSGISVNIQDLAPSCAGFLFGVANTAGALAGVVGVCLGGYLIETTGSWTCVFHLVAIVSNLGLGTFLVFGKAQRVDLVPTHEDL.

Positions 1 to 26 (MPSQRSSLMQPIPEETRKTPSAAAED) are disordered. The span at 14 to 26 (EETRKTPSAAAED) shows a compositional bias: basic and acidic residues. 11 consecutive transmembrane segments (helical) span residues 36 to 58 (LWTG…MPVC), 74 to 94 (GIVL…GGHL), 103 to 123 (VILL…LLAH), 129 to 149 (LAFV…YFPA), 169 to 189 (TVGA…SVLL), 197 to 217 (VFYF…KYLL), 252 to 272 (VWAV…LLSW), 287 to 307 (WVFN…SGFI), 327 to 347 (VMGL…TSFL), 380 to 400 (GFLF…GVCL), and 413 to 433 (CVFH…LVFG).

It belongs to the major facilitator superfamily. Sodium/anion cotransporter family.

The protein resides in the cytoplasmic vesicle. It localises to the secretory vesicle. It is found in the chromaffin granule membrane. Its subcellular location is the secretory vesicle membrane. The protein localises to the lysosome membrane. The enzyme catalyses ATP(in) = ATP(out). It catalyses the reaction ADP(in) = ADP(out). The catalysed reaction is GTP(in) = GTP(out). Activity is chloride-dependent. In terms of biological role, voltage-gated ATP nucleotide uniporter that can also transport the purine nucleotides ADP and GTP. Uses the membrane potential as the driving force to control ATP accumulation in lysosomes and secretory vesicles. By controlling ATP storage in lysosomes, regulates ATP-dependent proteins of these organelles. Also indirectly regulates the exocytosis of ATP through its import into lysosomes in astrocytes and secretory vesicles such as adrenal chromaffin granules, mucin granules and synaptic vesicles. The sequence is that of Voltage-gated purine nucleotide uniporter SLC17A9 from Rattus norvegicus (Rat).